Reading from the N-terminus, the 513-residue chain is MILGICDGHNASSSLIKRDEILFAMSEERFTRKKNQRGFPEKSVDYILNKVKPDEINYVSVGGVFRRGERIKKLKEFQNRINKKFLYFYHHISHSYLFKLSDFKEALVISIDGGGDGLSFLASIANKNNLEIIAQSDLIDSVGDFYASITELLGFKPMEDEGKVMSLSSYEGEDDINLTTIDYIKELKSFKNYLGVIGYEATKALKKLIVSDKSQLSFEDKVRISKFAQRTLENIVLKAIDDLSNEYNIDNIVFVGGVAQNVKLNSKIAEKYNLFVPPFMGDEGLCLGASLADKRIDRININNTYFGYEIENERAEKILEELKNKLNDYKIEFVEERDIPEVIGNLILDNKVVCLSRGKMEFGPRALGNRSVIALPTKENKEKINKKLKRSWFMPFAPTILYDFIDDYLINPRYSPFMTQIFKVKENKIKEIEGVIHVDKTTRPQTLKKDSNKTFYGIIRYIYDSIGIPVVLNTSFNLHGEPIVCNEKDAINSFLKADFDALLLGNYLISKVK.

The protein belongs to the NodU/CmcH family.

This is an uncharacterized protein from Methanocaldococcus jannaschii (strain ATCC 43067 / DSM 2661 / JAL-1 / JCM 10045 / NBRC 100440) (Methanococcus jannaschii).